The primary structure comprises 129 residues: uncharacterized protein (129 aa).

The next 3 helical transmembrane spans lie at 49 to 69 (LWSL…IVGV), 72 to 92 (FTIF…NLIF), and 101 to 118 (YFNC…NLLQ).

It is found in the membrane. This is an uncharacterized protein from Saccharomyces cerevisiae (strain ATCC 204508 / S288c) (Baker's yeast).